The primary structure comprises 891 residues: DNA mismatch repair protein MutS (891 aa).

Position 646-653 (G646–S653) interacts with ATP.

This sequence belongs to the DNA mismatch repair MutS family.

In terms of biological role, this protein is involved in the repair of mismatches in DNA. It is possible that it carries out the mismatch recognition step. This protein has a weak ATPase activity. This is DNA mismatch repair protein MutS from Rickettsia canadensis (strain McKiel).